A 217-amino-acid chain; its full sequence is Cytidylate kinase (217 aa).

10–18 (GPAGAGKST) is a binding site for ATP.

It belongs to the cytidylate kinase family. Type 1 subfamily.

The protein resides in the cytoplasm. The catalysed reaction is CMP + ATP = CDP + ADP. It carries out the reaction dCMP + ATP = dCDP + ADP. The polypeptide is Cytidylate kinase (Clostridium botulinum (strain Loch Maree / Type A3)).